The chain runs to 416 residues: L-cysteine:1D-myo-inositol 2-amino-2-deoxy-alpha-D-glucopyranoside ligase (416 aa).

Cys45 is a Zn(2+) binding site. L-cysteinyl-5'-AMP contacts are provided by residues 45 to 48, Thr60, and 83 to 85; these read CGIT and NVT. The 'HIGH' region signature appears at 47-57; the sequence is ITPYDSTHLGH. A 'ERGGDP' region motif is present at residues 191–196; that stretch reads ERGGDP. Trp232 is a binding site for L-cysteinyl-5'-AMP. Cys236 contacts Zn(2+). 254-256 provides a ligand contact to L-cysteinyl-5'-AMP; the sequence is GSD. His261 serves as a coordination point for Zn(2+). Val286 is an L-cysteinyl-5'-AMP binding site. Positions 292–296 match the 'KMSKS' region motif; the sequence is KMSKS.

It belongs to the class-I aminoacyl-tRNA synthetase family. MshC subfamily. As to quaternary structure, monomer. It depends on Zn(2+) as a cofactor.

It catalyses the reaction 1D-myo-inositol 2-amino-2-deoxy-alpha-D-glucopyranoside + L-cysteine + ATP = 1D-myo-inositol 2-(L-cysteinylamino)-2-deoxy-alpha-D-glucopyranoside + AMP + diphosphate + H(+). Functionally, catalyzes the ATP-dependent condensation of GlcN-Ins and L-cysteine to form L-Cys-GlcN-Ins. This chain is L-cysteine:1D-myo-inositol 2-amino-2-deoxy-alpha-D-glucopyranoside ligase, found in Brachybacterium faecium (strain ATCC 43885 / DSM 4810 / JCM 11609 / LMG 19847 / NBRC 14762 / NCIMB 9860 / 6-10).